The primary structure comprises 345 residues: MQKLTLTRPDDWHLHLRDGDALKAVLPHSARQFARAIVMPNLKPPVRTVADAADYRNRILAALPVGQTFEPLMTLYLTDNTSPEEISAAKASKFVKAVKYYPAGATTNSDFGVTDIRKCDRIFAAMEQEDIPLLLHGEVTDTNIDVFDREKVFIETHLIPLVSRFPKLRVVLEHITTSEAVTFVLNTNENIGATITPQHLLFSRNAIFKGGIRPHYYCLPILKREKHRQALLQAATSGNPKFFLGTDSAPHARNSKEQSCGCAGCYSALHAMELYAEAFESANALDKLEAFASFYGPDFYQLPRNTKTITLAKQTWQIPDEVPFPGTGLVPLRAGEEITWKIMDG.

Zn(2+) is bound by residues histidine 13 and histidine 15. Residues 15-17 (HLR) and asparagine 41 contribute to the substrate site. The Zn(2+) site is built by lysine 99, histidine 136, and histidine 174. At lysine 99 the chain carries N6-carboxylysine. Substrate is bound at residue histidine 136. Leucine 219 contributes to the substrate binding site. A Zn(2+)-binding site is contributed by aspartate 247. The active site involves aspartate 247. Substrate contacts are provided by histidine 251 and alanine 263.

Belongs to the metallo-dependent hydrolases superfamily. DHOase family. Class II DHOase subfamily. Homodimer. Zn(2+) is required as a cofactor.

The enzyme catalyses (S)-dihydroorotate + H2O = N-carbamoyl-L-aspartate + H(+). The protein operates within pyrimidine metabolism; UMP biosynthesis via de novo pathway; (S)-dihydroorotate from bicarbonate: step 3/3. Its function is as follows. Catalyzes the reversible cyclization of carbamoyl aspartate to dihydroorotate. In Acaryochloris marina (strain MBIC 11017), this protein is Dihydroorotase.